We begin with the raw amino-acid sequence, 262 residues long: Abhydrolase domain-containing protein ACTT2 (262 aa).

The Peroxisomal targeting signal type 1 signature appears at 260–262 (SKL).

It belongs to the AB hydrolase superfamily. AKT2 hydrolase family.

The protein resides in the peroxisome. It functions in the pathway mycotoxin biosynthesis. Abhydrolase domain-containing protein; part of the gene clusters that mediate the biosynthesis of the host-selective toxins (HSTs) ACT-toxins responsible for brown spot of tangerine disease by the tangerine pathotype which affects tangerines and mandarins. ACT-toxins consist of three moieties, 9,10-epoxy-8-hydroxy-9-methyl-decatrienoic acid (EDA), valine and a polyketide. ACT-toxin I is toxic to both citrus and pear; toxin II the 5''-deoxy derivative of ACT-toxin I, is highly toxic to pear and slightly toxic to citrus. On cellular level, ACT-toxins affect plasma membrane of susceptible cells and cause a sudden increase in loss of K(+) after a few minutes of toxin treatment. The acyl-CoA ligase ACTT1, the hydrolase ACTT2, the enoyl-CoA hydratases ACTT3 and ACTT6, and the acyl-CoA synthetase ACTT5 are all involved in the biosynthesis of the AK-, AF- and ACT-toxin common 9,10-epoxy-8-hydroxy-9-methyl-decatrienoic acid (EDA) structural moiety. The exact role of each enzyme, and of additional enzymes identified within the AF-toxin clusters have still to be determined. On the other hand, ACTTS1 to ACTTS4 are specific to the tangerine pathotype. The function of ACTTS3 is to elongate the polyketide chain portion of ACT-toxin that is unique to this toxin. The enoyl-reductase ACTTS2 might complement the missing enoyl-reductase (ER) domain in ACTTS3 in the synthesis of the polyketide portion of ACT-toxin. The roles of the nonribosomal peptide synthetases-related proteins ACTTS1 and ACTTS4 have also still not been elucidated. In Alternaria alternata (Alternaria rot fungus), this protein is Abhydrolase domain-containing protein ACTT2.